The chain runs to 91 residues: Small ribosomal subunit protein uS19 (91 aa).

Belongs to the universal ribosomal protein uS19 family.

Protein S19 forms a complex with S13 that binds strongly to the 16S ribosomal RNA. In Azotobacter vinelandii (strain DJ / ATCC BAA-1303), this protein is Small ribosomal subunit protein uS19.